We begin with the raw amino-acid sequence, 127 residues long: MRHLKSGRRLGRKTSHREAMFRNMVTSLFAHEKITTTDAKAKEIRSVAEKMITLGKRGDLHSTRIAAAFIREKSVVTKLFSTIAPRYKERAGGYTRIIKVGSRNGDAAPMSIIELVEEEFTPKASRA.

It belongs to the bacterial ribosomal protein bL17 family. As to quaternary structure, part of the 50S ribosomal subunit. Contacts protein L32.

In Pelobacter propionicus (strain DSM 2379 / NBRC 103807 / OttBd1), this protein is Large ribosomal subunit protein bL17.